The primary structure comprises 510 residues: Internal alternative NAD(P)H-ubiquinone oxidoreductase A1, mitochondrial (510 aa).

The N-terminal 48 residues, 1–48, are a transit peptide targeting the mitochondrion; that stretch reads MLWIKNLARISQTTSSSVGNVFRNPESYTLSSRFCTALQKQQVTDTVQ. 75–105 provides a ligand contact to FAD; that stretch reads RVLVLGSGWAGCRVLKGIDTSIYDVVCVSPR. 242–278 lines the NAD(+) pocket; the sequence is LHCVVVGGGPTGVEFSGELSDFIMKDVRQRYSHVKDD. The Microbody targeting signal motif lies at 501-510; the sequence is FVFGRDISRI.

It belongs to the NADH dehydrogenase family. Requires FAD as cofactor. Expressed in seedlings, cotyledons, young leaves, stems and flowers and, to a lower extent, in roots and buds.

The protein resides in the mitochondrion inner membrane. Its subcellular location is the peroxisome. It carries out the reaction a quinone + NADH + H(+) = a quinol + NAD(+). It catalyses the reaction a ubiquinone + NADH + H(+) = a ubiquinol + NAD(+). Functionally, alternative NADH-ubiquinone oxidoreductase which catalyzes the oxidation of mitochondrial NADH does not translocate protons across the inner mitochondrial membrane. In Arabidopsis thaliana (Mouse-ear cress), this protein is Internal alternative NAD(P)H-ubiquinone oxidoreductase A1, mitochondrial (NDA1).